A 343-amino-acid polypeptide reads, in one-letter code: S-adenosylmethionine:tRNA ribosyltransferase-isomerase (343 aa).

The protein belongs to the QueA family. As to quaternary structure, monomer.

The protein localises to the cytoplasm. It carries out the reaction 7-aminomethyl-7-carbaguanosine(34) in tRNA + S-adenosyl-L-methionine = epoxyqueuosine(34) in tRNA + adenine + L-methionine + 2 H(+). It functions in the pathway tRNA modification; tRNA-queuosine biosynthesis. Functionally, transfers and isomerizes the ribose moiety from AdoMet to the 7-aminomethyl group of 7-deazaguanine (preQ1-tRNA) to give epoxyqueuosine (oQ-tRNA). This chain is S-adenosylmethionine:tRNA ribosyltransferase-isomerase, found in Geobacter sulfurreducens (strain ATCC 51573 / DSM 12127 / PCA).